Reading from the N-terminus, the 89-residue chain is Putative ankyrin repeat protein RF_1157 (89 aa).

The stretch at 2–32 is one ANK repeat; sequence YNTTPLNFAINQENNEEVIKYLLANGANPRL.

The chain is Putative ankyrin repeat protein RF_1157 from Rickettsia felis (strain ATCC VR-1525 / URRWXCal2) (Rickettsia azadi).